The following is a 204-amino-acid chain: Peptide deformylase (204 aa).

Fe cation is bound by residues C131 and H174. Residue E175 is part of the active site. Position 178 (H178) interacts with Fe cation.

The protein belongs to the polypeptide deformylase family. Requires Fe(2+) as cofactor.

It catalyses the reaction N-terminal N-formyl-L-methionyl-[peptide] + H2O = N-terminal L-methionyl-[peptide] + formate. Removes the formyl group from the N-terminal Met of newly synthesized proteins. Requires at least a dipeptide for an efficient rate of reaction. N-terminal L-methionine is a prerequisite for activity but the enzyme has broad specificity at other positions. The polypeptide is Peptide deformylase (Streptococcus gordonii (strain Challis / ATCC 35105 / BCRC 15272 / CH1 / DL1 / V288)).